A 461-amino-acid polypeptide reads, in one-letter code: Phosphatidate cytidylyltransferase 1 (461 aa).

Positions 1 to 68 are disordered; that stretch reads MLELRHRGGC…PEVPPSSDRT (68 aa). The residue at position 7 (arginine 7) is an Omega-N-methylarginine. Residues 22-56 are compositionally biased toward basic and acidic residues; it reads REGEAAGGDHETESTSDKETDIDDRYGDLDARGDS. 2 positions are modified to phosphoserine: serine 35 and serine 37. The next 6 membrane-spanning stretches (helical) occupy residues 96–116, 149–169, 183–203, 230–250, 279–299, and 357–377; these read MISLFFLIIYMGSFMLMLLVL, FLLCVNYFFYGETVADYFATF, HRFISFALYLAGFCMFVLSLV, LVIQNLFEGMIWFLVPISSVI, GFIGGFFSTVIFGFIAAYVLS, and IALSTFASLIGPFGGFFASGF.

The protein belongs to the CDS family. As to quaternary structure, homodimer. Interacts with FOS; this interaction may enhance catalytic activity. Mg(2+) is required as a cofactor. As to expression, expressed in adult brain, eye, smooth muscle and testis. Highly expressed in the inner segment of the photoreceptor layer of adult retina.

It is found in the endoplasmic reticulum membrane. It carries out the reaction a 1,2-diacyl-sn-glycero-3-phosphate + CTP + H(+) = a CDP-1,2-diacyl-sn-glycerol + diphosphate. It catalyses the reaction 1-octadecanoyl-2-(5Z,8Z,11Z,14Z-eicosatetraenoyl)-sn-glycero-3-phosphate + CTP + H(+) = 1-octadecanoyl-2-(5Z,8Z,11Z,14Z-eicosatetraenoyl)-sn-glycero-3-cytidine-5'-diphosphate + diphosphate. The catalysed reaction is 1-octadecanoyl-2-(9Z,12Z-octadecadienoyl)-sn-glycero-3-phosphate + CTP + H(+) = 1-octadecanoyl-2-(9Z,12Z-octadecadienoyl)-sn-glycero-3-cytidine-5'-diphosphate + diphosphate. The enzyme catalyses 1-hexadecanoyl-2-(5Z,8Z,11Z,14Z-eicosatetraenoyl)-sn-glycero-3-phosphate + CTP + H(+) = 1-hexadecanoyl-2-(5Z,8Z,11Z,14Z-eicosatetraenoyl)-sn-glycero-3-cytidine-5'-diphosphate + diphosphate. It carries out the reaction 1,2-di-(5Z,8Z,11Z,14Z)-eicosatetraenoyl-sn-glycero-3-phosphate + CTP + H(+) = 1,2-di-(5Z,8Z,11Z,14Z-eicosatetraenoyl)-sn-glycero-3-cytidine-5'-diphosphate + diphosphate. It catalyses the reaction 1-octadecanoyl-2-(9Z-octadecenoyl)-sn-glycero-3-phosphate + CTP + H(+) = 1-octadecanoyl-2-(9Z-octadecenoyl)-sn-glycero-3-cytidine-5'-diphosphate + diphosphate. The catalysed reaction is 1-octadecanoyl-2-(4Z,7Z,10Z,13Z,16Z,19Z-docosahexaenoyl)-sn-glycero-3-phosphate + CTP + H(+) = 1-octadecanoyl-2-(4Z,7Z,10Z,13Z,16Z,19Z-docosahexaenoyl)-sn-glycero-3-cytidine-5'-diphosphate + diphosphate. The enzyme catalyses 1,2-di-(9Z,12Z-octadecadienoyl)-sn-glycero-3-phosphate + CTP + H(+) = 1,2-di-(9Z,12Z-octadecadienoyl)-sn-glycero-3-cytidine-5'-diphosphate + diphosphate. It carries out the reaction 1,2-di-(9Z-octadecenoyl)-sn-glycero-3-phosphate + CTP + H(+) = 1,2-di-(9Z-octadecenoyl)-sn-glycero-3-cytidine-5'-diphosphate + diphosphate. It participates in phospholipid metabolism; CDP-diacylglycerol biosynthesis; CDP-diacylglycerol from sn-glycerol 3-phosphate: step 3/3. Catalyzes the conversion of phosphatidic acid (PA) to CDP-diacylglycerol (CDP-DAG), an essential intermediate in the synthesis of phosphatidylglycerol, cardiolipin and phosphatidylinositol. Exhibits almost no acyl chain preference for PA, showing no discrimination for the sn-1/sn-2 acyl chain composition of PAs. Plays an important role in regulating the growth of lipid droplets which are storage organelles at the center of lipid and energy homeostasis. Positively regulates the differentiation and development of adipocytes. The protein is Phosphatidate cytidylyltransferase 1 of Mus musculus (Mouse).